We begin with the raw amino-acid sequence, 686 residues long: Glycogenin (686 aa).

UDP contacts are provided by Leu13, Asn16, Tyr19, and Arg82. UDP-alpha-D-glucose-binding residues include Leu13, Asn16, Tyr19, Arg82, Lys91, Asp107, Ala108, Asp109, Asn139, Thr140, Asp166, Asp169, and Gln170. UDP contacts are provided by Asp107, Ala108, and Asp109. Asp107 contacts Mn(2+). Mn(2+) is bound at residue Asp109. O-linked (Glc...) tyrosine glycans are attached at residues Tyr196 and Tyr198. Residues His213, Gly216, and Lys219 each coordinate UDP. His213 contributes to the Mn(2+) binding site. 2 residues coordinate UDP-alpha-D-glucose: Gly216 and Lys219. Disordered regions lie at residues 264-331, 381-444, 460-533, and 603-686; these read VKGE…ANFP, PEPT…RGNA, KHRR…GVPA, and KPLR…VLET. 2 stretches are compositionally biased toward low complexity: residues 285–308 and 398–416; these read SSQS…YTSH and SAAS…ASPT. The interval 307–686 is not required for catalytic activity; the sequence is SHGASWDASR…TEEERDVLET (380 aa). Polar residues-rich tracts occupy residues 424–442 and 471–483; these read VTPT…TTRG and AATS…GRAQ. Positions 677–686 are enriched in acidic residues; it reads TEEERDVLET.

The protein belongs to the glycosyltransferase 8 family. Glycogenin subfamily. In terms of assembly, interacts with glycogen synthase gsy-1; the interaction is direct. The cofactor is Mn(2+).

The protein localises to the cytoplasm. The protein resides in the vacuole. It carries out the reaction L-tyrosyl-[glycogenin] + UDP-alpha-D-glucose = alpha-D-glucosyl-L-tyrosyl-[glycogenin] + UDP + H(+). The catalysed reaction is [1,4-alpha-D-glucosyl](n)-L-tyrosyl-[glycogenin] + UDP-alpha-D-glucose = [1,4-alpha-D-glucosyl](n+1)-L-tyrosyl-[glycogenin] + UDP + H(+). In terms of biological role, self-glucosylating initiator of glycogen synthesis. It catalyzes the formation of a short alpha (1,4)-glucosyl chain covalently attached via a glucose 1-O-tyrosyl linkage to internal tyrosine residues and these chains act as primers for the elongation reaction catalyzed by glycogen synthase. The chain is Glycogenin from Neurospora crassa (strain ATCC 24698 / 74-OR23-1A / CBS 708.71 / DSM 1257 / FGSC 987).